Reading from the N-terminus, the 541-residue chain is Chaperonin GroEL 2 (541 aa).

Residues 29-32 (TLGP), 86-90 (DGTTT), Gly413, 476-478 (NAA), and Asp492 each bind ATP.

Belongs to the chaperonin (HSP60) family. In terms of assembly, forms a cylinder of 14 subunits composed of two heptameric rings stacked back-to-back. Interacts with the co-chaperonin GroES.

The protein localises to the secreted. Its subcellular location is the capsule. It is found in the cell surface. It localises to the cell wall. It carries out the reaction ATP + H2O + a folded polypeptide = ADP + phosphate + an unfolded polypeptide.. Its function is as follows. Together with its co-chaperonin GroES, plays an essential role in assisting protein folding. The GroEL-GroES system forms a nano-cage that allows encapsulation of the non-native substrate proteins and provides a physical environment optimized to promote and accelerate protein folding. This Mycolicibacterium vanbaalenii (strain DSM 7251 / JCM 13017 / BCRC 16820 / KCTC 9966 / NRRL B-24157 / PYR-1) (Mycobacterium vanbaalenii) protein is Chaperonin GroEL 2.